Consider the following 477-residue polypeptide: ATP synthase subunit beta (477 aa).

148–155 (GGAGVGKT) provides a ligand contact to ATP.

This sequence belongs to the ATPase alpha/beta chains family. In terms of assembly, F-type ATPases have 2 components, CF(1) - the catalytic core - and CF(0) - the membrane proton channel. CF(1) has five subunits: alpha(3), beta(3), gamma(1), delta(1), epsilon(1). CF(0) has three main subunits: a(1), b(2) and c(9-12). The alpha and beta chains form an alternating ring which encloses part of the gamma chain. CF(1) is attached to CF(0) by a central stalk formed by the gamma and epsilon chains, while a peripheral stalk is formed by the delta and b chains.

The protein localises to the cell inner membrane. The catalysed reaction is ATP + H2O + 4 H(+)(in) = ADP + phosphate + 5 H(+)(out). Functionally, produces ATP from ADP in the presence of a proton gradient across the membrane. The catalytic sites are hosted primarily by the beta subunits. This chain is ATP synthase subunit beta, found in Psychrobacter arcticus (strain DSM 17307 / VKM B-2377 / 273-4).